The following is a 271-amino-acid chain: MTTEKPLNLLISNDDGIFALGVRTLANTLAKAGHQVTVVCPDRERSATGHGLTLHQPIRAQIVEGIFDPQVTAWSCSGTPSDCIKFALSAVLFTRPDFVLSGINHGSNLGTDILYSGTVSAAMEGLIDGITSIALSLTSFSSQDFQPAANFAVDLIAKLARHPLPQPTLLNVNVPPVKSEDMAGVKLTRQGLRRYRENFEKRLDPRGKSYYWLVGEVIEEIEQPDHLHLPGHIPTDVQAIGDNYITITPLQYNLTDVQGFSDLNQTQWFDP.

A divalent metal cation-binding residues include Asp-14, Asp-15, Ser-46, and Asn-104.

The protein belongs to the SurE nucleotidase family. A divalent metal cation serves as cofactor.

The protein resides in the cytoplasm. It carries out the reaction a ribonucleoside 5'-phosphate + H2O = a ribonucleoside + phosphate. In terms of biological role, nucleotidase that shows phosphatase activity on nucleoside 5'-monophosphates. The chain is 5'-nucleotidase SurE from Gloeothece citriformis (strain PCC 7424) (Cyanothece sp. (strain PCC 7424)).